We begin with the raw amino-acid sequence, 591 residues long: Aspartate--tRNA(Asp/Asn) ligase (591 aa).

Glutamate 175 serves as a coordination point for L-aspartate. The tract at residues 199–202 (QQYK) is aspartate. The L-aspartate site is built by arginine 221 and histidine 450. 221–223 (RDE) provides a ligand contact to ATP. Glutamate 484 contributes to the ATP binding site. Arginine 491 serves as a coordination point for L-aspartate. 536–539 (GVDR) contacts ATP.

This sequence belongs to the class-II aminoacyl-tRNA synthetase family. Type 1 subfamily. As to quaternary structure, homodimer.

The protein localises to the cytoplasm. The enzyme catalyses tRNA(Asx) + L-aspartate + ATP = L-aspartyl-tRNA(Asx) + AMP + diphosphate. Functionally, aspartyl-tRNA synthetase with relaxed tRNA specificity since it is able to aspartylate not only its cognate tRNA(Asp) but also tRNA(Asn). Reaction proceeds in two steps: L-aspartate is first activated by ATP to form Asp-AMP and then transferred to the acceptor end of tRNA(Asp/Asn). In Rhodopseudomonas palustris (strain TIE-1), this protein is Aspartate--tRNA(Asp/Asn) ligase.